A 332-amino-acid chain; its full sequence is Putative integrase/recombinase y4rC (332 aa).

The Core-binding (CB) domain maps to 5 to 98 (ASLAPLLESF…AIHSFFRYAA (94 aa)). Positions 122–307 (TLVNFLTRPE…TLAMKEAALA (186 aa)) constitute a Tyr recombinase domain. Active-site residues include Arg-162, Lys-187, His-259, Arg-262, and His-285. Tyr-294 serves as the catalytic O-(3'-phospho-DNA)-tyrosine intermediate.

This sequence belongs to the 'phage' integrase family.

In Sinorhizobium fredii (strain NBRC 101917 / NGR234), this protein is Putative integrase/recombinase y4rC.